A 188-amino-acid chain; its full sequence is UPF0301 protein CPn_0139/CP_0633/CPj0139/CpB0140 (188 aa).

This sequence belongs to the UPF0301 (AlgH) family.

The protein is UPF0301 protein CPn_0139/CP_0633/CPj0139/CpB0140 of Chlamydia pneumoniae (Chlamydophila pneumoniae).